Reading from the N-terminus, the 553-residue chain is ATP synthase subunit alpha (553 aa).

G173–T180 lines the ATP pocket. The segment at E527–H553 is disordered. The span at A533–H553 shows a compositional bias: basic and acidic residues.

It belongs to the ATPase alpha/beta chains family. As to quaternary structure, F-type ATPases have 2 components, CF(1) - the catalytic core - and CF(0) - the membrane proton channel. CF(1) has five subunits: alpha(3), beta(3), gamma(1), delta(1), epsilon(1). CF(0) has three main subunits: a(1), b(2) and c(9-12). The alpha and beta chains form an alternating ring which encloses part of the gamma chain. CF(1) is attached to CF(0) by a central stalk formed by the gamma and epsilon chains, while a peripheral stalk is formed by the delta and b chains.

The protein localises to the cell membrane. It carries out the reaction ATP + H2O + 4 H(+)(in) = ADP + phosphate + 5 H(+)(out). Produces ATP from ADP in the presence of a proton gradient across the membrane. The alpha chain is a regulatory subunit. The polypeptide is ATP synthase subunit alpha (Parafrankia sp. (strain EAN1pec)).